The primary structure comprises 109 residues: Period circadian protein (109 aa).

Residues 59 to 109 are disordered; that stretch reads CFEGSGGSGSSGNFTSGSNLNMRSVTNTSNTGTGTSSESVPLVTLTEALIS. Over residues 69–98 the composition is skewed to low complexity; it reads SGNFTSGSNLNMRSVTNTSNTGTGTSSESV.

In terms of assembly, forms a heterodimer with timeless (TIM); the complex then translocates into the nucleus. Post-translationally, phosphorylated with a circadian rhythmicity, probably by the double-time protein (dbt). Phosphorylation could be implicated in the stability of per monomer and in the formation of heterodimer per-tim.

It localises to the nucleus. It is found in the cytoplasm. The protein localises to the perinuclear region. In terms of biological role, essential for biological clock functions. Determines the period length of circadian and ultradian rhythms; an increase in PER dosage leads to shortened circadian rhythms and a decrease leads to lengthened circadian rhythms. Essential for the circadian rhythmicity of locomotor activity, eclosion behavior, and for the rhythmic component of the male courtship song that originates in the thoracic nervous system. The biological cycle depends on the rhythmic formation and nuclear localization of the TIM-PER complex. Light induces the degradation of TIM, which promotes elimination of PER. Nuclear activity of the heterodimer coordinatively regulates PER and TIM transcription through a negative feedback loop. Behaves as a negative element in circadian transcriptional loop. Does not appear to bind DNA, suggesting indirect transcriptional inhibition. The protein is Period circadian protein (per) of Syritta pipiens (Hoverfly).